A 676-amino-acid polypeptide reads, in one-letter code: DNA-directed RNA polymerase subunit beta' (676 aa).

Residues cysteine 69, cysteine 71, cysteine 87, and cysteine 90 each contribute to the Zn(2+) site. Residues aspartate 485, aspartate 487, and aspartate 489 each contribute to the Mg(2+) site.

Belongs to the RNA polymerase beta' chain family. RpoC1 subfamily. As to quaternary structure, in plastids the minimal PEP RNA polymerase catalytic core is composed of four subunits: alpha, beta, beta', and beta''. When a (nuclear-encoded) sigma factor is associated with the core the holoenzyme is formed, which can initiate transcription. Mg(2+) is required as a cofactor. Zn(2+) serves as cofactor.

The protein resides in the plastid. Its subcellular location is the chloroplast. It carries out the reaction RNA(n) + a ribonucleoside 5'-triphosphate = RNA(n+1) + diphosphate. Its function is as follows. DNA-dependent RNA polymerase catalyzes the transcription of DNA into RNA using the four ribonucleoside triphosphates as substrates. The polypeptide is DNA-directed RNA polymerase subunit beta' (Fagopyrum esculentum subsp. ancestrale (Wild buckwheat)).